The primary structure comprises 307 residues: Beta-lactamase (307 aa).

Residues 1–34 (MRNRGFGRRELLVAMAMLVSVTGCARHASGARPA) constitute a signal peptide (tat-type signal). Ser84 (acyl-ester intermediate) is an active-site residue. A substrate-binding site is contributed by Ser142. Glu182 acts as the Proton acceptor in catalysis. 251-253 (TGT) contacts substrate.

This sequence belongs to the class-A beta-lactamase family. As to quaternary structure, monomer. Post-translationally, exported by the Tat system. The position of the signal peptide cleavage has not been experimentally proven.

The protein localises to the periplasm. The protein resides in the secreted. It carries out the reaction a beta-lactam + H2O = a substituted beta-amino acid. Its activity is regulated as follows. Is inhibited by clavulanate. Extended spectrum beta-lactamase (ESBL) that inactivates beta-lactam antibiotics by hydrolyzing the amide group of the beta-lactam ring. Displays high levels of penicillinase and cephalosporinase activity as well as measurable activity with carbapenems, including imipenem and meropenem. Plays a primary role in the intrinsic resistance of mycobacteria to beta-lactam antibiotics. This chain is Beta-lactamase (blaC), found in Mycobacterium bovis (strain ATCC BAA-935 / AF2122/97).